Reading from the N-terminus, the 224-residue chain is Lipoprotein-releasing system ATP-binding protein LolD (224 aa).

Positions 4–224 (YTAKDISKNY…TLLDGSLQEE (221 aa)) constitute an ABC transporter domain. 40-47 (GASGSGKT) contacts ATP.

This sequence belongs to the ABC transporter superfamily. Lipoprotein translocase (TC 3.A.1.125) family. In terms of assembly, the complex is composed of two ATP-binding proteins (LolD) and two transmembrane proteins (LolC and LolE).

It is found in the cell inner membrane. In terms of biological role, part of the ABC transporter complex LolCDE involved in the translocation of mature outer membrane-directed lipoproteins, from the inner membrane to the periplasmic chaperone, LolA. Responsible for the formation of the LolA-lipoprotein complex in an ATP-dependent manner. This chain is Lipoprotein-releasing system ATP-binding protein LolD, found in Desulfotalea psychrophila (strain LSv54 / DSM 12343).